Reading from the N-terminus, the 68-residue chain is Large ribosomal subunit protein uL29 (68 aa).

The protein belongs to the universal ribosomal protein uL29 family.

In Streptococcus gordonii (strain Challis / ATCC 35105 / BCRC 15272 / CH1 / DL1 / V288), this protein is Large ribosomal subunit protein uL29.